The sequence spans 393 residues: S-adenosylmethionine synthase (393 aa).

Position 16 (His-16) interacts with ATP. Position 18 (Asp-18) interacts with Mg(2+). K(+) is bound at residue Glu-44. Positions 57 and 100 each coordinate L-methionine. Residues 100 to 110 are flexible loop; that stretch reads QSNDIAQGVDH. ATP-binding positions include 167–169, 238–239, Asp-247, 253–254, Ala-270, and Lys-274; these read DAK, RF, and RK. Position 247 (Asp-247) interacts with L-methionine. L-methionine is bound at residue Lys-278.

Belongs to the AdoMet synthase family. Homotetramer; dimer of dimers. The cofactor is Mg(2+). Requires K(+) as cofactor.

The protein resides in the cytoplasm. It carries out the reaction L-methionine + ATP + H2O = S-adenosyl-L-methionine + phosphate + diphosphate. Its pathway is amino-acid biosynthesis; S-adenosyl-L-methionine biosynthesis; S-adenosyl-L-methionine from L-methionine: step 1/1. Its function is as follows. Catalyzes the formation of S-adenosylmethionine (AdoMet) from methionine and ATP. The overall synthetic reaction is composed of two sequential steps, AdoMet formation and the subsequent tripolyphosphate hydrolysis which occurs prior to release of AdoMet from the enzyme. This Acidovorax ebreus (strain TPSY) (Diaphorobacter sp. (strain TPSY)) protein is S-adenosylmethionine synthase.